The sequence spans 134 residues: uncharacterized protein (134 aa).

Its subcellular location is the cell membrane. Functionally, may have a role in the regulation of NDH-1 biosynthesis. This is an uncharacterized protein from Paracoccus denitrificans.